The sequence spans 124 residues: Small ribosomal subunit protein uS12cz/uS12cy (124 aa).

The protein belongs to the universal ribosomal protein uS12 family. As to quaternary structure, part of the 30S ribosomal subunit.

Its subcellular location is the plastid. It localises to the chloroplast. In terms of biological role, with S4 and S5 plays an important role in translational accuracy. Located at the interface of the 30S and 50S subunits. In Agrostis stolonifera (Creeping bentgrass), this protein is Small ribosomal subunit protein uS12cz/uS12cy (rps12-A).